Consider the following 312-residue polypeptide: Malate dehydrogenase (312 aa).

NAD(+)-binding positions include 7-13 (GAAGGIG) and aspartate 34. Substrate is bound by residues arginine 81 and arginine 87. Residues asparagine 94 and 117–119 (ITN) each bind NAD(+). The substrate site is built by asparagine 119 and arginine 153. Residue histidine 177 is the Proton acceptor of the active site. An NAD(+)-binding site is contributed by methionine 227.

Belongs to the LDH/MDH superfamily. MDH type 1 family. As to quaternary structure, homodimer.

The enzyme catalyses (S)-malate + NAD(+) = oxaloacetate + NADH + H(+). In terms of biological role, catalyzes the reversible oxidation of malate to oxaloacetate. This is Malate dehydrogenase from Klebsiella pneumoniae (strain 342).